A 259-amino-acid chain; its full sequence is tRNA pseudouridine synthase A (259 aa).

The active-site Nucleophile is the Asp50. Substrate is bound at residue Tyr101.

The protein belongs to the tRNA pseudouridine synthase TruA family.

It carries out the reaction uridine(38/39/40) in tRNA = pseudouridine(38/39/40) in tRNA. In terms of biological role, formation of pseudouridine at positions 38, 39 and 40 in the anticodon stem and loop of transfer RNAs. The protein is tRNA pseudouridine synthase A of Methanocaldococcus jannaschii (strain ATCC 43067 / DSM 2661 / JAL-1 / JCM 10045 / NBRC 100440) (Methanococcus jannaschii).